The sequence spans 414 residues: Putative polyketide beta-ketoacyl synthase 2 (414 aa).

Positions 4–407 (PRRAVVTGLG…GNNSALVLRR (404 aa)) constitute a Ketosynthase family 3 (KS3) domain.

It belongs to the thiolase-like superfamily. Beta-ketoacyl-ACP synthases family.

In terms of biological role, involved in developmentally regulated synthesis of a compound biosynthetically related to polyketide antibiotics which is essential for spore color in Streptomyces halstedii. The sequence is that of Putative polyketide beta-ketoacyl synthase 2 (sch2) from Streptomyces halstedii.